The primary structure comprises 718 residues: MMFRDQVGVLAGWFKGWNECEQTVALLSLLKRVSQTQARFLQLCLEHSLADCAELHVLEREANSPGIINQWQQESKDKVISLLLTHLPLLKPGNLDAKVEYMKLLPKILAHSIEHNQHIEESRQLLSYALIHPATSLEDRSALAMWLNHLEDRTSTSFGGQNRGRSDSVDYGQTHYYHQRQNSDDKLNGWQNSRDSGICINASNWQDKSMGCENGHVPLYSSSSVPTTINTIGTSTSTILSGQAHHSPLKRSVSLTPPMNVPNQPLGHGWMSHEDLRARGPQCLPSDHAPLSPQSSVASSGSGGSEHLEDQTTARNTFQEEGSGMKDVPAWLKSLRLHKYAALFSQMTYEEMMALTECQLEAQNVTKGARHKIVISIQKLKERQNLLKSLERDIIEGGSLRIPLQELHQMILTPIKAYSSPSTTPEARRREPQAPRQPSLMGPESQSPDCKDGAAATGATATPSAGASGGLQPHQLSSCDGELAVAPLPEGDLPGQFTRVMGKVCTQLLVSRPDEENISSYLQLIDKCLIHEAFTETQKKRLLSWKQQVQKLFRSFPRKTLLDISGYRQQRNRGFGQSNSLPTAGSVGGGMGRRNPRQYQIPSRNVPSARLGLLGTSGFVSSNQRNTTATPTIMKQGRQNLWFANPGGSNSMPSRTHSSVQRTRSLPVHTSPQNMLMFQQPEFQLPVTEPDINNRLESLCLSMTEHALGDGVDRTSTI.

At S168 the chain carries Phosphoserine. 3 disordered regions span residues A278–S323, K416–H474, and N572–I601. In terms of domain architecture, SAM spans S323–E391. Residue S420 is modified to Phosphoserine. At T424 the chain carries Phosphothreonine. Positions G453–G466 are enriched in low complexity. R573 bears the Omega-N-methylarginine mark. Residue S580 is modified to Phosphoserine.

Belongs to the SMAUG family.

It localises to the cytoplasm. Its subcellular location is the cell projection. The protein localises to the dendrite. The protein resides in the synapse. It is found in the synaptosome. Its function is as follows. Acts as a translational repressor of SRE-containing messengers. This chain is Protein Smaug homolog 1 (SAMD4A), found in Homo sapiens (Human).